A 199-amino-acid polypeptide reads, in one-letter code: Potassium-transporting ATPase KdpC subunit 2 (199 aa).

A helical transmembrane segment spans residues 13–33; it reads ITLIFWLVTAIIYPLAILVVG.

The protein belongs to the KdpC family. As to quaternary structure, the system is composed of three essential subunits: KdpA, KdpB and KdpC.

Its subcellular location is the cell inner membrane. Functionally, part of the high-affinity ATP-driven potassium transport (or Kdp) system, which catalyzes the hydrolysis of ATP coupled with the electrogenic transport of potassium into the cytoplasm. This subunit acts as a catalytic chaperone that increases the ATP-binding affinity of the ATP-hydrolyzing subunit KdpB by the formation of a transient KdpB/KdpC/ATP ternary complex. This is Potassium-transporting ATPase KdpC subunit 2 from Nostoc sp. (strain PCC 7120 / SAG 25.82 / UTEX 2576).